A 197-amino-acid chain; its full sequence is dCTP deaminase, dUMP-forming (197 aa).

DCTP is bound by residues 105–110 (RSSMGR), aspartate 123, 131–133 (TLE), glutamine 152, tyrosine 166, lysine 174, and glutamine 178. The active-site Proton donor/acceptor is the glutamate 133.

It belongs to the dCTP deaminase family. In terms of assembly, homotrimer.

The catalysed reaction is dCTP + 2 H2O = dUMP + NH4(+) + diphosphate. The protein operates within pyrimidine metabolism; dUMP biosynthesis; dUMP from dCTP: step 1/1. In terms of biological role, bifunctional enzyme that catalyzes both the deamination of dCTP to dUTP and the hydrolysis of dUTP to dUMP without releasing the toxic dUTP intermediate. This is dCTP deaminase, dUMP-forming from Methanosphaera stadtmanae (strain ATCC 43021 / DSM 3091 / JCM 11832 / MCB-3).